A 2278-amino-acid chain; its full sequence is Protein Ycf2 (2278 aa).

Residue 1632-1639 participates in ATP binding; sequence GSIGTGRS.

Belongs to the Ycf2 family.

The protein localises to the plastid. The protein resides in the chloroplast stroma. Functionally, probable ATPase of unknown function. Its presence in a non-photosynthetic plant (Epifagus virginiana) and experiments in tobacco indicate that it has an essential function which is probably not related to photosynthesis. The sequence is that of Protein Ycf2 from Solanum tuberosum (Potato).